The following is a 406-amino-acid chain: Calreticulin (406 aa).

Residues 1–17 (MMWCKTVIVLLATVGFI) form the signal peptide. Cys105 and Cys137 are oxidised to a cystine. Residues Tyr109, Lys111, Tyr128, and Asp135 each coordinate an alpha-D-glucoside. Repeat copies occupy residues 191–202 (VESGNLEDDWDF), 210–221 (DPTATKPEDWDD), 227–238 (DPDDKKPEDWDK), 244–255 (DPDATKPEDWDD), 259–269 (GEWEPPMIDNP), 273–283 (GEWQPKQLDNP), and 287–297 (GAWEHPEIANP). The segment at 191 to 255 (VESGNLEDDW…DATKPEDWDD (65 aa)) is 4 X approximate repeats. The segment covering 207–251 (KIKDPTATKPEDWDDRATIPDPDDKKPEDWDKPEHIPDPDATKPE) has biased composition (basic and acidic residues). The tract at residues 207–259 (KIKDPTATKPEDWDDRATIPDPDDKKPEDWDKPEHIPDPDATKPEDWDDEMDG) is disordered. Residues 259–297 (GEWEPPMIDNPEFKGEWQPKQLDNPNYKGAWEHPEIANP) form a 3 X approximate repeats region. Asp317 is an an alpha-D-glucoside binding site. The disordered stretch occupies residues 347–406 (KNTQAGEKKMKEAQDEVQRKKDEEEAKKASDKDDEDEDDDDEEKDDESKQDKDQSEHDEL). Over residues 352–377 (GEKKMKEAQDEVQRKKDEEEAKKASD) the composition is skewed to basic and acidic residues. A compositionally biased stretch (acidic residues) spans 378 to 391 (KDDEDEDDDDEEKD). The span at 392-406 (DESKQDKDQSEHDEL) shows a compositional bias: basic and acidic residues.

It belongs to the calreticulin family.

The protein resides in the endoplasmic reticulum lumen. In terms of biological role, molecular calcium-binding chaperone promoting folding, oligomeric assembly and quality control in the ER via the calreticulin/calnexin cycle. This lectin may interact transiently with almost all of the monoglucosylated glycoproteins that are synthesized in the ER. The polypeptide is Calreticulin (Drosophila melanogaster (Fruit fly)).